Here is a 236-residue protein sequence, read N- to C-terminus: Phosphoribosylaminoimidazole-succinocarboxamide synthase (236 aa).

It belongs to the SAICAR synthetase family.

It catalyses the reaction 5-amino-1-(5-phospho-D-ribosyl)imidazole-4-carboxylate + L-aspartate + ATP = (2S)-2-[5-amino-1-(5-phospho-beta-D-ribosyl)imidazole-4-carboxamido]succinate + ADP + phosphate + 2 H(+). The protein operates within purine metabolism; IMP biosynthesis via de novo pathway; 5-amino-1-(5-phospho-D-ribosyl)imidazole-4-carboxamide from 5-amino-1-(5-phospho-D-ribosyl)imidazole-4-carboxylate: step 1/2. The chain is Phosphoribosylaminoimidazole-succinocarboxamide synthase from Rickettsia africae (strain ESF-5).